The primary structure comprises 535 residues: Alpha-1,3-mannosyl-glycoprotein 4-beta-N-acetylglucosaminyltransferase A (535 aa).

Topologically, residues 1–4 are cytoplasmic; it reads MRLR. The helical; Signal-anchor for type II membrane protein transmembrane segment at 5 to 27 threads the bilayer; it reads NGTVATALAFITSFLTLSWYTTW. Residues 28-63 are a coiled coil; that stretch reads QNGKEKLIAYQREFLALKERLRIAEHRISQRSSELN. At 28-535 the chain is on the lumenal side; sequence QNGKEKLIAY…NEIHIKKATK (508 aa). Residues Asn77 and Asn458 are each glycosylated (N-linked (GlcNAc...) asparagine). Ser474 carries the post-translational modification Phosphoserine.

The protein belongs to the glycosyltransferase 54 family. A divalent metal cation serves as cofactor. Post-translationally, N-glycosylated.

Its subcellular location is the golgi apparatus membrane. The protein resides in the secreted. The enzyme catalyses N(4)-{beta-D-GlcNAc-(1-&gt;2)-alpha-D-Man-(1-&gt;3)-[beta-D-GlcNAc-(1-&gt;2)-alpha-D-Man-(1-&gt;6)]-beta-D-Man-(1-&gt;4)-beta-D-GlcNAc-(1-&gt;4)-beta-D-GlcNAc}-L-asparaginyl-[protein] + UDP-N-acetyl-alpha-D-glucosamine = N(4)-{beta-D-GlcNAc-(1-&gt;2)-[beta-D-GlcNAc-(1-&gt;4)]-alpha-D-Man-(1-&gt;3)-[beta-D-GlcNAc-(1-&gt;2)-alpha-D-Man-(1-&gt;6)]-beta-D-Man-(1-&gt;4)-beta-D-GlcNAc-(1-&gt;4)-beta-D-GlcNAc}-L-asparaginyl-[protein] + UDP + H(+). It carries out the reaction an N(4)-{beta-D-GlcNAc-(1-&gt;2)-alpha-D-Man-(1-&gt;3)-[alpha-D-Man-(1-&gt;6)]-beta-D-Man-(1-&gt;4)-beta-D-GlcNAc-(1-&gt;4)-beta-D-GlcNAc}-L-asparaginyl-[protein] + UDP-N-acetyl-alpha-D-glucosamine = an N(4)-{beta-D-GlcNAc-(1-&gt;2)-[beta-D-GlcNAc-(1-&gt;4)]-alpha-D-Man-(1-&gt;3)-[alpha-D-Man-(1-&gt;6)]-beta-D-Man-(1-&gt;4)-beta-D-GlcNAc-(1-&gt;4)-beta-D-GlcNAc}-L-asparaginyl-[protein] + UDP + H(+). The catalysed reaction is an N(4)-{beta-D-GlcNAc-(1-&gt;2)-alpha-D-Man-(1-&gt;3)-[beta-D-GlcNAc-(1-&gt;2)-[beta-D-GlcNAc-(1-&gt;6)]-alpha-D-Man-(1-&gt;6)]-beta-D-Man-(1-&gt;4)-beta-D-GlcNAc-(1-&gt;4)-beta-D-GlcNAc}-L-asparaginyl-[protein] + UDP-N-acetyl-alpha-D-glucosamine = an N(4)-{beta-D-GlcNAc-(1-&gt;2)-[beta-D-GlcNAc-(1-&gt;4)]-alpha-D-Man-(1-&gt;3)-[beta-D-GlcNAc-(1-&gt;2)-[beta-D-GlcNAc-(1-&gt;6)]-alpha-D-Man-(1-&gt;6)]-beta-D-Man-(1-&gt;4)-beta-D-GlcNAc-(1-&gt;4)-beta-D-GlcNAc}-L-asparaginyl-[protein] + UDP + H(+). It catalyses the reaction an N(4)-{beta-D-GlcNAc-(1-&gt;2)-alpha-D-Man-(1-&gt;3)-[beta-D-GlcNAc-(1-&gt;2)-alpha-D-Man-(1-&gt;6)]-beta-D-Man-(1-&gt;4)-beta-D-GlcNAc-(1-&gt;4)-[alpha-L-Fuc-(1-&gt;6)]-beta-D-GlcNAc}-L-asparaginyl-[protein] + UDP-N-acetyl-alpha-D-glucosamine = N(4)-{beta-D-GlcNAc-(1-&gt;2)-[beta-D-GlcNAc-(1-&gt;4)]-alpha-D-Man-(1-&gt;3)-[beta-D-GlcNAc-(1-&gt;2)-alpha-D-Man-(1-&gt;6)]-beta-D-Man-(1-&gt;4)-beta-D-GlcNAc-(1-&gt;4)-[alpha-L-Fuc-(1-&gt;6)]-beta-D-GlcNAc}-asparaginyl-[protein] + UDP + H(+). The enzyme catalyses an N(4)-{beta-D-GlcNAc-(1-&gt;2)-alpha-D-Man-(1-&gt;3)-[beta-D-Gal-(1-&gt;4)-beta-D-GlcNAc-(1-&gt;2)-alpha-D-Man-(1-&gt;6)]-beta-D-Man-(1-&gt;4)-beta-D-GlcNAc-(1-&gt;4)-beta-D-GlcNAc}-L-asparaginyl-[protein] + UDP-N-acetyl-alpha-D-glucosamine = an N(4)-{beta-D-GlcNAc-(1-&gt;2)-[beta-D-GlcNAc-(1-&gt;4)]-alpha-D-Man-(1-&gt;3)-[beta-D-Gal-(1-&gt;4)-beta-D-GlcNAc-(1-&gt;2)-alpha-D-Man-(1-&gt;6)]-beta-D-Man-(1-&gt;4)-beta-D-GlcNAc-(1-&gt;4)-beta-D-GlcNAc}-L-asparaginyl-[protein] + UDP + H(+). It carries out the reaction N(4)-{beta-D-GlcNAc-(1-&gt;2)-alpha-D-Man-(1-&gt;3)-[alpha-D-Man-(1-&gt;3)-{alpha-D-Man-(1-&gt;6)}-alpha-D-Man-(1-&gt;6)]-beta-D-Man-(1-&gt;4)-beta-D-GlcNAc-(1-&gt;4)-beta-D-GlcNAc}-asparaginyl-[protein] + UDP-N-acetyl-alpha-D-glucosamine = N(4)-{beta-D-GlcNAc-(1-&gt;2)-[beta-D-GlcNAc-(1-&gt;4)]-alpha-D-Man-(1-&gt;3)-[alpha-D-Man-(1-&gt;3)-{alpha-D-Man-(1-&gt;6)}-alpha-D-Man-(1-&gt;6)]-beta-D-Man-(1-&gt;4)-beta-D-GlcNAc-(1-&gt;4)-beta-D-GlcNAc}-asparaginyl-[protein] + UDP + H(+). The catalysed reaction is N(4)-{beta-D-GlcNAc-(1-&gt;2)-alpha-D-Man-(1-&gt;3)-beta-D-Man-(1-&gt;4)-beta-D-GlcNAc-(1-&gt;4)-beta-D-GlcNAc}-asparaginyl-[protein] + UDP-N-acetyl-alpha-D-glucosamine = N(4)-{beta-D-GlcNAc-(1-&gt;2)-[beta-D-GlcNAc-(1-&gt;4)]-alpha-D-Man-(1-&gt;3)-beta-D-Man-(1-&gt;4)-beta-D-GlcNAc-(1-&gt;4)-beta-D-GlcNAc}-asparaginyl-[protein] + UDP + H(+). Its pathway is protein modification; protein glycosylation. Its activity is regulated as follows. Inhibited by UDP. Functionally, glycosyltransferase that catalyze the transfer of GlcNAc from UDP-GlcNAc to the GlcNAcbeta1-2Manalpha1-3 arm of the core structure of N-linked glycans through a beta1-4 linkage and participates in the production of tri- and tetra-antennary N-linked sugar chains. Involved in glucose transport by mediating SLC2A2/GLUT2 glycosylation, thereby controlling cell-surface expression of SLC2A2 in pancreatic beta cells. The chain is Alpha-1,3-mannosyl-glycoprotein 4-beta-N-acetylglucosaminyltransferase A from Macaca fascicularis (Crab-eating macaque).